Here is a 390-residue protein sequence, read N- to C-terminus: Succinate--CoA ligase [ADP-forming] subunit beta (390 aa).

Residues 9–244 (KSLFQQYGIP…ISQEDVREAK (236 aa)) form the ATP-grasp domain. K46, E99, L102, and E107 together coordinate ATP. Mg(2+) contacts are provided by N199 and D213. Substrate is bound by residues N264 and 321-323 (GIV).

The protein belongs to the succinate/malate CoA ligase beta subunit family. As to quaternary structure, heterotetramer of two alpha and two beta subunits. It depends on Mg(2+) as a cofactor.

It carries out the reaction succinate + ATP + CoA = succinyl-CoA + ADP + phosphate. It catalyses the reaction GTP + succinate + CoA = succinyl-CoA + GDP + phosphate. It functions in the pathway carbohydrate metabolism; tricarboxylic acid cycle; succinate from succinyl-CoA (ligase route): step 1/1. In terms of biological role, succinyl-CoA synthetase functions in the citric acid cycle (TCA), coupling the hydrolysis of succinyl-CoA to the synthesis of either ATP or GTP and thus represents the only step of substrate-level phosphorylation in the TCA. The beta subunit provides nucleotide specificity of the enzyme and binds the substrate succinate, while the binding sites for coenzyme A and phosphate are found in the alpha subunit. The sequence is that of Succinate--CoA ligase [ADP-forming] subunit beta from Hydrogenovibrio crunogenus (strain DSM 25203 / XCL-2) (Thiomicrospira crunogena).